The sequence spans 443 residues: Eukaryotic translation initiation factor 3 subunit E (443 aa).

One can recognise a PCI domain in the interval 249–417 (LDLFFNAGFI…GTVVMNHPPS (169 aa)).

It belongs to the eIF-3 subunit E family. As to quaternary structure, component of the eukaryotic translation initiation factor 3 (eIF-3) complex.

Its subcellular location is the cytoplasm. Component of the eukaryotic translation initiation factor 3 (eIF-3) complex, which is involved in protein synthesis of a specialized repertoire of mRNAs and, together with other initiation factors, stimulates binding of mRNA and methionyl-tRNAi to the 40S ribosome. The eIF-3 complex specifically targets and initiates translation of a subset of mRNAs involved in cell proliferation. In Neurospora crassa (strain ATCC 24698 / 74-OR23-1A / CBS 708.71 / DSM 1257 / FGSC 987), this protein is Eukaryotic translation initiation factor 3 subunit E (int-6).